Reading from the N-terminus, the 91-residue chain is Small ribosomal subunit protein bS20 (91 aa).

The segment covering 1–18 (MPLHKSAEKRLRQSERRN) has biased composition (basic and acidic residues). Positions 1 to 25 (MPLHKSAEKRLRQSERRNARNRARK) are disordered.

It belongs to the bacterial ribosomal protein bS20 family.

Functionally, binds directly to 16S ribosomal RNA. In Chlorobium luteolum (strain DSM 273 / BCRC 81028 / 2530) (Pelodictyon luteolum), this protein is Small ribosomal subunit protein bS20.